The primary structure comprises 58 residues: UPF0391 membrane protein Sputcn32_1322 (58 aa).

The next 2 membrane-spanning stretches (helical) occupy residues 6-26 (LMFLVVAIIAGLFGFTGIAGA) and 28-48 (AGIAKIIFFLFIVLLVISLLV).

This sequence belongs to the UPF0391 family.

It is found in the cell membrane. This is UPF0391 membrane protein Sputcn32_1322 from Shewanella putrefaciens (strain CN-32 / ATCC BAA-453).